Consider the following 492-residue polypeptide: B3 domain-containing protein REM3 (492 aa).

Residues 12-104 constitute a DNA-binding region (TF-B3 1); it reads NRPFFVRSLA…VFHVTPSGRS (93 aa). The segment covering 105 to 116 has biased composition (low complexity); it reads FSQIRTSSSSGD. Residues 105–134 are disordered; that stretch reads FSQIRTSSSSGDYDSDDDDDEAGDDDSDSK. Residues 117 to 131 show a composition bias toward acidic residues; the sequence is YDSDDDDDEAGDDDS. DNA-binding regions (TF-B3) lie at residues 154 to 250 and 286 to 382; these read YCLL…LCFK and FLTV…FCSE. Over residues 385 to 395 the composition is skewed to basic and acidic residues; sequence IEQEEAPEERG. The disordered stretch occupies residues 385-427; the sequence is IEQEEAPEERGTPLPKRARVSAEVGHSRRTQAPNKSSDDPKIL.

The protein localises to the nucleus. The polypeptide is B3 domain-containing protein REM3 (REM3) (Arabidopsis thaliana (Mouse-ear cress)).